The sequence spans 194 residues: ATP-dependent Clp protease proteolytic subunit (194 aa).

The active-site Nucleophile is the serine 98. Histidine 123 is a catalytic residue.

It belongs to the peptidase S14 family. Fourteen ClpP subunits assemble into 2 heptameric rings which stack back to back to give a disk-like structure with a central cavity, resembling the structure of eukaryotic proteasomes.

It is found in the cytoplasm. The catalysed reaction is Hydrolysis of proteins to small peptides in the presence of ATP and magnesium. alpha-casein is the usual test substrate. In the absence of ATP, only oligopeptides shorter than five residues are hydrolyzed (such as succinyl-Leu-Tyr-|-NHMec, and Leu-Tyr-Leu-|-Tyr-Trp, in which cleavage of the -Tyr-|-Leu- and -Tyr-|-Trp bonds also occurs).. Functionally, cleaves peptides in various proteins in a process that requires ATP hydrolysis. Has a chymotrypsin-like activity. Plays a major role in the degradation of misfolded proteins. This chain is ATP-dependent Clp protease proteolytic subunit, found in Staphylococcus carnosus (strain TM300).